The chain runs to 2178 residues: DNA-directed RNA polymerase subunit beta (2178 aa).

3 insert regions span residues 269-325 (SKKI…TPFV), 714-1508 (KRID…LFYN), and 1703-1900 (KGND…LQPM).

Belongs to the RNA polymerase beta chain family. As to quaternary structure, in plastids the minimal PEP RNA polymerase catalytic core is composed of four subunits: alpha, beta, beta', and beta''. When a (nuclear-encoded) sigma factor is associated with the core the holoenzyme is formed, which can initiate transcription.

Its subcellular location is the plastid. The protein localises to the chloroplast. The enzyme catalyses RNA(n) + a ribonucleoside 5'-triphosphate = RNA(n+1) + diphosphate. In terms of biological role, DNA-dependent RNA polymerase catalyzes the transcription of DNA into RNA using the four ribonucleoside triphosphates as substrates. The chain is DNA-directed RNA polymerase subunit beta from Tupiella akineta (Green alga).